A 67-amino-acid chain; its full sequence is Large ribosomal subunit protein uL29 (67 aa).

This sequence belongs to the universal ribosomal protein uL29 family. Part of the 50S ribosomal subunit. Contacts protein L23 and trigger factor when it is complexed with the ribosome.

Binds the 23S rRNA. One of the proteins that surrounds the polypeptide exit tunnel on the outside of the subunit. This is Large ribosomal subunit protein uL29 (rpmC) from Deinococcus radiodurans (strain ATCC 13939 / DSM 20539 / JCM 16871 / CCUG 27074 / LMG 4051 / NBRC 15346 / NCIMB 9279 / VKM B-1422 / R1).